A 374-amino-acid polypeptide reads, in one-letter code: Queuine tRNA-ribosyltransferase (374 aa).

The active-site Proton acceptor is D89. Substrate-binding positions include 89–93, D143, Q187, and G214; that span reads DSGGF. The tract at residues 245 to 251 is RNA binding; sequence GVGKPED. The Nucleophile role is filled by D264. The RNA binding; important for wobble base 34 recognition stretch occupies residues 269–273; sequence TRNAR. Zn(2+) is bound by residues C302, C304, C307, and H333.

The protein belongs to the queuine tRNA-ribosyltransferase family. Homodimer. Within each dimer, one monomer is responsible for RNA recognition and catalysis, while the other monomer binds to the replacement base PreQ1. Requires Zn(2+) as cofactor.

It carries out the reaction 7-aminomethyl-7-carbaguanine + guanosine(34) in tRNA = 7-aminomethyl-7-carbaguanosine(34) in tRNA + guanine. It participates in tRNA modification; tRNA-queuosine biosynthesis. Catalyzes the base-exchange of a guanine (G) residue with the queuine precursor 7-aminomethyl-7-deazaguanine (PreQ1) at position 34 (anticodon wobble position) in tRNAs with GU(N) anticodons (tRNA-Asp, -Asn, -His and -Tyr). Catalysis occurs through a double-displacement mechanism. The nucleophile active site attacks the C1' of nucleotide 34 to detach the guanine base from the RNA, forming a covalent enzyme-RNA intermediate. The proton acceptor active site deprotonates the incoming PreQ1, allowing a nucleophilic attack on the C1' of the ribose to form the product. After dissociation, two additional enzymatic reactions on the tRNA convert PreQ1 to queuine (Q), resulting in the hypermodified nucleoside queuosine (7-(((4,5-cis-dihydroxy-2-cyclopenten-1-yl)amino)methyl)-7-deazaguanosine). The protein is Queuine tRNA-ribosyltransferase of Shewanella sp. (strain W3-18-1).